The sequence spans 41 residues: Alpha-1B-glycoprotein (41 aa).

Asn23 carries N-linked (GlcNAc...) asparagine glycosylation.

In terms of assembly, interacts with CRISP3. Glycosylated. Plasma.

It localises to the secreted. This is Alpha-1B-glycoprotein (A1BG) from Equus caballus (Horse).